A 311-amino-acid chain; its full sequence is Acetyl-coenzyme A carboxylase carboxyl transferase subunit beta (311 aa).

Residues 32–299 form the CoA carboxyltransferase N-terminal domain; it reads LWVKCPVSEE…TSMPAALTPP (268 aa). The disordered stretch occupies residues 291-311; that stretch reads SMPAALTPPAPDHVVADGGSH.

Belongs to the AccD/PCCB family. As to quaternary structure, acetyl-CoA carboxylase is a heterohexamer composed of biotin carboxyl carrier protein (AccB), biotin carboxylase (AccC) and two subunits each of ACCase subunit alpha (AccA) and ACCase subunit beta (AccD).

Its subcellular location is the cytoplasm. The catalysed reaction is N(6)-carboxybiotinyl-L-lysyl-[protein] + acetyl-CoA = N(6)-biotinyl-L-lysyl-[protein] + malonyl-CoA. It functions in the pathway lipid metabolism; malonyl-CoA biosynthesis; malonyl-CoA from acetyl-CoA: step 1/1. Functionally, component of the acetyl coenzyme A carboxylase (ACC) complex. Biotin carboxylase (BC) catalyzes the carboxylation of biotin on its carrier protein (BCCP) and then the CO(2) group is transferred by the transcarboxylase to acetyl-CoA to form malonyl-CoA. The sequence is that of Acetyl-coenzyme A carboxylase carboxyl transferase subunit beta from Maricaulis maris (strain MCS10) (Caulobacter maris).